A 462-amino-acid chain; its full sequence is Chromosomal replication initiator protein DnaA (462 aa).

Residues 1–83 (MSLSLWQQCL…LRFEVGSKPA (83 aa)) are domain I, interacts with DnaA modulators. The tract at residues 83–125 (AARAHNNPVTASVSAPVAPVTRSAPMRPSWDNSPAQPELSYRS) is domain II. The disordered stretch occupies residues 104–125 (RSAPMRPSWDNSPAQPELSYRS). Over residues 112–125 (WDNSPAQPELSYRS) the composition is skewed to polar residues. The domain III, AAA+ region stretch occupies residues 126–342 (NVNPKHTFDN…GALNRVIANA (217 aa)). 4 residues coordinate ATP: G170, G172, K173, and T174. The domain IV, binds dsDNA stretch occupies residues 343-462 (NFTGRAITID…FSNLIRTLSS (120 aa)).

This sequence belongs to the DnaA family. Oligomerizes as a right-handed, spiral filament on DNA at oriC.

The protein localises to the cytoplasm. Plays an essential role in the initiation and regulation of chromosomal replication. ATP-DnaA binds to the origin of replication (oriC) to initiate formation of the DNA replication initiation complex once per cell cycle. Binds the DnaA box (a 9 base pair repeat at the origin) and separates the double-stranded (ds)DNA. Forms a right-handed helical filament on oriC DNA; dsDNA binds to the exterior of the filament while single-stranded (ss)DNA is stabiized in the filament's interior. The ATP-DnaA-oriC complex binds and stabilizes one strand of the AT-rich DNA unwinding element (DUE), permitting loading of DNA polymerase. After initiation quickly degrades to an ADP-DnaA complex that is not apt for DNA replication. Binds acidic phospholipids. The polypeptide is Chromosomal replication initiator protein DnaA (Yersinia pseudotuberculosis serotype O:1b (strain IP 31758)).